The chain runs to 370 residues: MRVLALLLAVKAACVLLVSSLTGTGAVNNSGRWWGIVNVASSGNLLTNSKNVQLVLDPSLALLSRRQRKLIRQNPGILHAIAAGLHTAIKECKWQFRNRRWNCPTTHSPNVFGKIVNRGCRETAFVFAITSAGVTHAVARSCSEGAIESCTCDYRRRGPGGPDWHWGGCSDNVEFGRMFGREFVDSSERGRDLRYLTNLHNNEAGRMTVASEMQQECKCHGMSGSCTVRTCWMRLPSFRLVGDYLKDRFDGASRVVYANKGSNRASHRADPRHLEPENPAHKLPSSRDLVYFEKSPNFCSYNGKTGTHGTSGRTCNSSSPALDGCELLCCGRGYKTRMEQVTERCHCTFHWCCHVSCLNCTSTQTVHQCL.

A signal peptide spans 1–19; that stretch reads MRVLALLLAVKAACVLLVS. The N-linked (GlcNAc...) asparagine glycan is linked to Asn28. Disulfide bonds link Cys92–Cys103, Cys142–Cys150, Cys152–Cys169, Cys217–Cys231, and Cys219–Cys226. A lipid anchor (O-palmitoleoyl serine; by PORCN) is attached at Ser223. The interval 261-282 is disordered; that stretch reads GSNRASHRADPRHLEPENPAHK. A compositionally biased stretch (basic and acidic residues) spans 267–280; that stretch reads HRADPRHLEPENPA. Cystine bridges form between Cys299–Cys330, Cys315–Cys325, Cys329–Cys369, Cys345–Cys360, Cys347–Cys357, and Cys352–Cys353. N-linked (GlcNAc...) asparagine glycosylation occurs at Asn316. Residue Asn359 is glycosylated (N-linked (GlcNAc...) asparagine).

Belongs to the Wnt family. Palmitoleoylation is required for efficient binding to frizzled receptors. Palmitoleoylation is necessary for proper trafficking to cell surface. Depalmitoleoylated by NOTUM, leading to inhibit Wnt signaling pathway.

It is found in the secreted. It localises to the extracellular space. Its subcellular location is the extracellular matrix. Ligand for members of the frizzled family of seven transmembrane receptors. Acts in the canonical Wnt signaling pathway by promoting beta-catenin-dependent transcriptional activation. Involved in neurogenesis. Performs a partially redundant function with wnt10b in the formation of the midbrain-hindbrain boundary (MHB) organizer. In the hindbrain, mediates lateral inhibition of boundary cell specification, probably via up-regulation of proneural and Delta gene expression in non-boundary cells; localized expression of wnt1 in boundary cells is maintained via rfng-mediated modulation of Notch activity. In Danio rerio (Zebrafish), this protein is Protein Wnt-1 (wnt1).